We begin with the raw amino-acid sequence, 253 residues long: 5'-nucleotidase SurE (253 aa).

A divalent metal cation-binding residues include Asp-8, Asp-9, Ser-39, and Asn-95.

The protein belongs to the SurE nucleotidase family. A divalent metal cation serves as cofactor.

It localises to the cytoplasm. It catalyses the reaction a ribonucleoside 5'-phosphate + H2O = a ribonucleoside + phosphate. Functionally, nucleotidase that shows phosphatase activity on nucleoside 5'-monophosphates. This chain is 5'-nucleotidase SurE, found in Clostridium beijerinckii (strain ATCC 51743 / NCIMB 8052) (Clostridium acetobutylicum).